Here is a 148-residue protein sequence, read N- to C-terminus: uncharacterized protein (148 aa).

Positions 1-20 (MNLTKLLPAFAAAVVLSACA) are cleaved as a signal peptide.

This is an uncharacterized protein from Haemophilus influenzae (strain ATCC 51907 / DSM 11121 / KW20 / Rd).